Reading from the N-terminus, the 131-residue chain is MTAKIFSLDEVSKHKTKSDLWVVIHNKVYDITRFVVEHPGGEEVLVDEGGKDATEAFEDIGHSDEAREMLEEYLIGSLDEASRTKEYNVNVIRAGELPEEKKGSSLRIILPALAIIGALVYKYVIVPKAHQ.

Residues 3 to 79 form the Cytochrome b5 heme-binding domain; sequence AKIFSLDEVS…LEEYLIGSLD (77 aa). His38 and His62 together coordinate heme. A helical transmembrane segment spans residues 108 to 125; sequence IILPALAIIGALVYKYVI.

Belongs to the cytochrome b5 family.

It is found in the endoplasmic reticulum membrane. The protein localises to the microsome membrane. Membrane bound hemoprotein which function as an electron carrier for several membrane bound oxygenases. The protein is Cytochrome b5 of Rhizopus stolonifer (Rhizopus nigricans).